The chain runs to 280 residues: UPF0276 protein NMA0228 (280 aa).

This sequence belongs to the UPF0276 family.

The sequence is that of UPF0276 protein NMA0228 from Neisseria meningitidis serogroup A / serotype 4A (strain DSM 15465 / Z2491).